We begin with the raw amino-acid sequence, 200 residues long: Small ribosomal subunit protein uS4 (200 aa).

Residues 22 to 42 (TGKELEKRPYAPGPHGPNQRK) are disordered. In terms of domain architecture, S4 RNA-binding spans 92–152 (ARLDNLVYRM…EKSRNLAVIK (61 aa)).

The protein belongs to the universal ribosomal protein uS4 family. As to quaternary structure, part of the 30S ribosomal subunit. Contacts protein S5. The interaction surface between S4 and S5 is involved in control of translational fidelity.

One of the primary rRNA binding proteins, it binds directly to 16S rRNA where it nucleates assembly of the body of the 30S subunit. Functionally, with S5 and S12 plays an important role in translational accuracy. This chain is Small ribosomal subunit protein uS4, found in Bacillus cytotoxicus (strain DSM 22905 / CIP 110041 / 391-98 / NVH 391-98).